Reading from the N-terminus, the 305-residue chain is Methionyl-tRNA formyltransferase (305 aa).

(6S)-5,6,7,8-tetrahydrofolate is bound at residue 111 to 114; that stretch reads SLLP.

The protein belongs to the Fmt family.

It catalyses the reaction L-methionyl-tRNA(fMet) + (6R)-10-formyltetrahydrofolate = N-formyl-L-methionyl-tRNA(fMet) + (6S)-5,6,7,8-tetrahydrofolate + H(+). Attaches a formyl group to the free amino group of methionyl-tRNA(fMet). The formyl group appears to play a dual role in the initiator identity of N-formylmethionyl-tRNA by promoting its recognition by IF2 and preventing the misappropriation of this tRNA by the elongation apparatus. The sequence is that of Methionyl-tRNA formyltransferase from Helicobacter pylori (strain HPAG1).